We begin with the raw amino-acid sequence, 101 residues long: uncharacterized protein (101 aa).

The disordered stretch occupies residues 76–101; the sequence is KGNVTRRRKKTHLGNDDGKKEAQEKM. Residues 88 to 101 are compositionally biased toward basic and acidic residues; it reads LGNDDGKKEAQEKM.

This is an uncharacterized protein from Homo sapiens (Human).